The primary structure comprises 550 residues: Flagellin (550 aa).

The protein belongs to the bacterial flagellin family.

It is found in the secreted. Its subcellular location is the bacterial flagellum. In terms of biological role, flagellin is the subunit protein which polymerizes to form the filaments of bacterial flagella. This chain is Flagellin (fliC), found in Shigella flexneri.